A 79-amino-acid polypeptide reads, in one-letter code: Tau-theraphotoxin-Hs1a (79 aa).

6 cysteine pairs are disulfide-bonded: Cys-2–Cys-16, Cys-9–Cys-23, Cys-15–Cys-31, Cys-44–Cys-58, Cys-51–Cys-63, and Cys-57–Cys-71. Domain repeat units follow at residues Cys-2–Cys-31 and Thr-42–Cys-71. Residues Cys-2–Cys-71 form a 2 X approximate repeats with cysteine pattern C-C-CC-C-C region.

Belongs to the neurotoxin 23 family. Double-knot toxin subfamily. Interacts with TRPV1 (2 toxins (4 moieties) bind 1 channel (homotetramer)). In terms of tissue distribution, expressed by the venom gland.

The protein localises to the secreted. In terms of biological role, selectively activates the heat-activated TRPV1 channel. It binds to TRPV1 in an open state-dependent manner, trapping it there to produce irreversible currents. It binds to the outer edge of the external pore of TRPV1 in a counterclockwise configuration, using a limited protein-protein interface and inserting hydrophobic residues into the bilayer. It also partitions naturally into membranes, with the two lobes exhibiting opposing energetics for membrane partitioning (K1) and channel activation (K2). In addition, the toxin disrupts a cluster of hydrophobic residues behind the selectivity filter that are critical for channel activation. The protein is Tau-theraphotoxin-Hs1a of Cyriopagopus schmidti (Chinese bird spider).